A 204-amino-acid polypeptide reads, in one-letter code: Imidazoleglycerol-phosphate dehydratase (204 aa).

The protein belongs to the imidazoleglycerol-phosphate dehydratase family.

The protein resides in the cytoplasm. It carries out the reaction D-erythro-1-(imidazol-4-yl)glycerol 3-phosphate = 3-(imidazol-4-yl)-2-oxopropyl phosphate + H2O. The protein operates within amino-acid biosynthesis; L-histidine biosynthesis; L-histidine from 5-phospho-alpha-D-ribose 1-diphosphate: step 6/9. The sequence is that of Imidazoleglycerol-phosphate dehydratase from Rhodococcus erythropolis (strain PR4 / NBRC 100887).